The chain runs to 108 residues: Nucleoid-associated protein CPS_3743 (108 aa).

Residues 87-108 (NKDKMGALTGGMQLPPGMKMPF) form a disordered region.

Belongs to the YbaB/EbfC family. In terms of assembly, homodimer.

The protein resides in the cytoplasm. Its subcellular location is the nucleoid. In terms of biological role, binds to DNA and alters its conformation. May be involved in regulation of gene expression, nucleoid organization and DNA protection. The sequence is that of Nucleoid-associated protein CPS_3743 from Colwellia psychrerythraea (strain 34H / ATCC BAA-681) (Vibrio psychroerythus).